Reading from the N-terminus, the 169-residue chain is Ribosomal RNA large subunit methyltransferase H (169 aa).

S-adenosyl-L-methionine is bound by residues L85, G117, and 136 to 141; that span reads LGELTW.

The protein belongs to the RNA methyltransferase RlmH family. Homodimer.

Its subcellular location is the cytoplasm. The catalysed reaction is pseudouridine(1915) in 23S rRNA + S-adenosyl-L-methionine = N(3)-methylpseudouridine(1915) in 23S rRNA + S-adenosyl-L-homocysteine + H(+). Specifically methylates the pseudouridine at position 1915 (m3Psi1915) in 23S rRNA. In Brucella ovis (strain ATCC 25840 / 63/290 / NCTC 10512), this protein is Ribosomal RNA large subunit methyltransferase H.